Consider the following 1185-residue polypeptide: Chromosome partition protein Smc (1185 aa).

34–41 (PNGSGKSN) provides a ligand contact to ATP. 2 coiled-coil regions span residues 174 to 376 (WRRS…EKDI) and 412 to 526 (ENIV…KLDV). Residues 534–644 (VGEIISLQKK…CENIDNAFEI (111 aa)) form the SMC hinge domain. Residues 679–1039 (NIIGRKREIE…IDAMTEKMKG (361 aa)) are a coiled coil.

It belongs to the SMC family. In terms of assembly, homodimer.

The protein localises to the cytoplasm. In terms of biological role, required for chromosome condensation and partitioning. This is Chromosome partition protein Smc from Clostridium kluyveri (strain NBRC 12016).